Here is a 742-residue protein sequence, read N- to C-terminus: MEEGFRDRAAFIRGAKDIAKEVKKHAAKKVVKGLDRVQDEYSRRSYSRFEEEDDDDDFPAPADGYYRGEGAQDEEEGGASSDATEGHDEDDEIYEGEYQGIPRAESGGKGERMADGAPLAGVRGGLSDGEGPPGGRGEAQRRKDREELAQQYETILRECGHGRFQWTLYFVLGLALMADGVEVFVVGFVLPSAEKDMCLSDSNKGMLGLIVYLGMMVGAFLWGGLADRLGRRQCLLISLSVNSVFAFFSSFVQGYGTFLFCRLLSGVGIGGSIPIVFSYFSEFLAQEKRGEHLSWLCMFWMIGGVYAAAMAWAIIPHYGWSFQMGSAYQFHSWRVFVLVCAFPSVFAIGALTTQPESPRFFLENGKHDEAWMVLKQVHDTNMRAKGHPERVFSVTHIKTIHQEDELIEIQSDTGTWYQRWGVRALSLGGQVWGNFLSCFSPEYRRITLMMMGVWFTMSFSYYGLTVWFPDMIRHLQAVDYAARTKVFPGERVEHVTFNFTLENQIHRGGQYFNDKFIGLRLKSVSFEDSLFEECYFEDVTSSNTFFRNCTFINTVFYNTDLFEYKFVNSRLVNSTFLHNKEGCPLDVTGTGEGAYMVYFVSFLGTLAVLPGNIVSALLMDKIGRLRMLAGSSVLSCVSCFFLSFGNSESAMIALLCLFGGVSIASWNALDVLTVELYPSDKRTTAFGFLNALCKLAAVLGISIFTSFVGITKAAPILFASAALALGSSLALKLPETRGQVLQ.

Residues 1-57 are interaction with SYT1; it reads MEEGFRDRAAFIRGAKDIAKEVKKHAAKKVVKGLDRVQDEYSRRSYSRFEEEDDDDD. Residues 1–169 lie on the Cytoplasmic side of the membrane; it reads MEEGFRDRAA…GHGRFQWTLY (169 aa). Basic and acidic residues predominate over residues 40–49; the sequence is EYSRRSYSRF. Positions 40-145 are disordered; the sequence is EYSRRSYSRF…RGEAQRRKDR (106 aa). A phosphoserine mark is found at S80 and S81. T84 is subject to Phosphothreonine. Positions 122–137 are enriched in gly residues; that stretch reads VRGGLSDGEGPPGGRG. The residue at position 127 (S127) is a Phosphoserine. Residues 170–190 traverse the membrane as a helical segment; the sequence is FVLGLALMADGVEVFVVGFVL. Over 191–205 the chain is Extracellular; it reads PSAEKDMCLSDSNKG. A helical membrane pass occupies residues 206-226; the sequence is MLGLIVYLGMMVGAFLWGGLA. Over 227–233 the chain is Cytoplasmic; the sequence is DRLGRRQ. Residues 234-254 traverse the membrane as a helical segment; the sequence is CLLISLSVNSVFAFFSSFVQG. The Extracellular portion of the chain corresponds to 255–262; it reads YGTFLFCR. A helical membrane pass occupies residues 263 to 283; the sequence is LLSGVGIGGSIPIVFSYFSEF. Over 284 to 294 the chain is Cytoplasmic; it reads LAQEKRGEHLS. A helical transmembrane segment spans residues 295 to 315; that stretch reads WLCMFWMIGGVYAAAMAWAII. Topologically, residues 316–334 are extracellular; the sequence is PHYGWSFQMGSAYQFHSWR. A helical membrane pass occupies residues 335-355; that stretch reads VFVLVCAFPSVFAIGALTTQP. Topologically, residues 356–447 are cytoplasmic; that stretch reads ESPRFFLENG…CFSPEYRRIT (92 aa). At S393 the chain carries Phosphoserine. The chain crosses the membrane as a helical span at residues 448–468; the sequence is LMMMGVWFTMSFSYYGLTVWF. At 469-598 the chain is on the extracellular side; sequence PDMIRHLQAV…GTGEGAYMVY (130 aa). Phosphotyrosine is present on Y480. N498, N548, and N573 each carry an N-linked (GlcNAc...) asparagine glycan. The helical transmembrane segment at 599 to 619 threads the bilayer; the sequence is FVSFLGTLAVLPGNIVSALLM. The Cytoplasmic segment spans residues 620-626; the sequence is DKIGRLR. A helical transmembrane segment spans residues 627–647; sequence MLAGSSVLSCVSCFFLSFGNS. Topologically, residues 648-651 are extracellular; the sequence is ESAM. The helical transmembrane segment at 652–672 threads the bilayer; that stretch reads IALLCLFGGVSIASWNALDVL. Topologically, residues 673 to 685 are cytoplasmic; sequence TVELYPSDKRTTA. The chain crosses the membrane as a helical span at residues 686-708; sequence FGFLNALCKLAAVLGISIFTSFV. At 709 to 712 the chain is on the extracellular side; the sequence is GITK. A helical transmembrane segment spans residues 713–731; it reads AAPILFASAALALGSSLAL. The Cytoplasmic segment spans residues 732–742; the sequence is KLPETRGQVLQ.

It belongs to the major facilitator superfamily. As to quaternary structure, interacts with SYT1/synaptotagmin-1 in a calcium-dependent manner. Binds the adapter protein complex AP-2. In terms of assembly, (Microbial infection) Interacts with C.botulinum neurotoxin type A (BoNT/A, botA). Phosphorylation by CK1 of the N-terminal cytoplasmic domain regulates interaction with SYT1. In terms of processing, N-glycosylated. In terms of tissue distribution, expressed in conventional synapses and cone ribbon synapses in the retina (at protein level). Expressed in diaphragm motor nerve terminals (at protein level). Expressed in hippocampus neurons (at protein level).

The protein resides in the presynapse. Its subcellular location is the cytoplasmic vesicle. It localises to the secretory vesicle. The protein localises to the synaptic vesicle membrane. Its function is as follows. Plays a role in the control of regulated secretion in neural and endocrine cells, enhancing selectively low-frequency neurotransmission. Positively regulates vesicle fusion by maintaining the readily releasable pool of secretory vesicles. Functionally, (Microbial infection) Receptor for C.botulinum neurotoxin type A (BoNT/A, botA); the toxin probably binds via extracellular loop 4. (Microbial infection) Possible receptor for C.botulinum neurotoxin type D (BoNT/D, botD); BoNT/D does not bind to extracellular loop 4 as do BoNT/A and BoNT/E. In terms of biological role, (Microbial infection) Receptor for C.botulinum neurotoxin type E (BoNT/E); the toxin probably binds via extracellular loop 4. It probably requires glycosylation of Asn-573. In Mus musculus (Mouse), this protein is Synaptic vesicle glycoprotein 2A (Sv2a).